The primary structure comprises 159 residues: SsrA-binding protein (159 aa).

The disordered stretch occupies residues 132 to 159 (KDFDKRHTEKERDSDREIQRAMRHGKDD).

This sequence belongs to the SmpB family.

Its subcellular location is the cytoplasm. Functionally, required for rescue of stalled ribosomes mediated by trans-translation. Binds to transfer-messenger RNA (tmRNA), required for stable association of tmRNA with ribosomes. tmRNA and SmpB together mimic tRNA shape, replacing the anticodon stem-loop with SmpB. tmRNA is encoded by the ssrA gene; the 2 termini fold to resemble tRNA(Ala) and it encodes a 'tag peptide', a short internal open reading frame. During trans-translation Ala-aminoacylated tmRNA acts like a tRNA, entering the A-site of stalled ribosomes, displacing the stalled mRNA. The ribosome then switches to translate the ORF on the tmRNA; the nascent peptide is terminated with the 'tag peptide' encoded by the tmRNA and targeted for degradation. The ribosome is freed to recommence translation, which seems to be the essential function of trans-translation. This Pseudomonas aeruginosa (strain LESB58) protein is SsrA-binding protein.